The following is a 519-amino-acid chain: Dideacetyl fusicoccin A C-19 hydroxylase (519 aa).

Residues 16–36 (LPVAPILFTALAATIGAFLLS) traverse the membrane as a helical segment. N-linked (GlcNAc...) asparagine glycans are attached at residues Asn-177, Asn-327, Asn-414, and Asn-432. Cys-454 contacts heme.

This sequence belongs to the cytochrome P450 family. Requires heme as cofactor.

The protein localises to the membrane. It participates in mycotoxin biosynthesis. Cytochrome P450 monooxygenase; part of the 2 gene clusters that mediate the biosynthesis of fusicoccins, diterpene glucosides that display phytohormone-like activity and function as potent activators of plasma membrane H(+)-ATPases in plants by modifying 14-3-3 proteins and cause the plant disease constriction canker. The first step in the pathway is performed by the fusicoccadiene synthase PaFS that possesses both prenyl transferase and terpene cyclase activity, converting isopentenyl diphosphate and dimethylallyl diphosphate into geranylgeranyl diphosphate (GGDP) and successively converting GGDP into fusicocca-2,10(14)-diene, a precursor for fusicoccin H. The second step is the oxidation at the C-8 position by the cytochrome P450 monooxygenase PaP450-2 to yield fusicocca-2,10(14)-diene-8-beta-ol. The cytochrome P450 monooxygenase PaP450-1 then catalyzes the hydroxylation at the C-16 position to produce fusicocca-2,10(14)-diene-8-beta,16-diol. The dioxygenase fc-dox then catalyzes the 16-oxydation of fusicocca-2,10(14)-diene-8-beta,16-diol to yield an aldehyde (8-beta-hydroxyfusicocca-1,10(14)-dien-16-al). The short-chain dehydrogenase/reductase fc-sdr catalyzes the reduction of the aldehyde to yield fusicocca-1,10(14)-diene-8-beta,16-diol. The next step is the hydroxylation at C-9 performed by the cytochrome P450 monooxygenase PaP450-3 that leads to fusicoccin H aglycon which is glycosylated to fusicoccin H by the O-glycosyltransferase PaGT. Hydroxylation at C-12 by the cytochrome P450 monooxygenase PaP450-4 leads then to the production of fusicoccin Q and is followed by methylation by the O-methyltransferase PaMT to yield fusicoccin P. Fusicoccin P is further converted to fusicoccin J via prenylation by the O-glucose prenyltransferase PaPT. Cytochrome P450 monooxygenase PaP450-5 then performs hydroxylation at C-19 to yield dideacetyl-fusicoccin A which is acetylated to 3'-O-deacetyl-fusicoccin A by the O-acetyltransferase PaAT-2. Finally, a another acetylation by the O-acetyltransferase PaAT-1 yields fusicoccin A. The polypeptide is Dideacetyl fusicoccin A C-19 hydroxylase (Phomopsis amygdali (Fusicoccum amygdali)).